We begin with the raw amino-acid sequence, 746 residues long: MVPGSEGPARAGGLVADVVFVIEGTANLGPYFEGLRKHYLLPAIEYFNGGPPAETDFGGDYGGTQYSLVVFNTVDCAPESYVQCHAPTSSAYEFVTWLDGIKFMGGGGESCSLIAEGLSTALQLFDDFKKMREQIGQTHRVCLLICNSPPYLLPAVESTTYSGCTTETLVQKIGERGIYFSIVSPRKLPALRLLFEKAAPPAMLEPLQPPADVSQDPRHMVLVRGLVLPVGGGSAPGPLQPKQPVPLPPAAPAGATLSTAPQQPLPPVPQQYQVPGNLSAAQVAAQNAVEAAKNQKAGLGPRFSPINPLQQATPGVGPPYSQTQATQLPPGPPGAPKPPPASQPSLVSTVAPGPGLAPPAQPGAPSMAGTVAPGGVSGPSPAQLGAPALGGQQSVSNKLLAWSGVLEWQEKPKPASVDANTKLTRSLPCQVYVNHGENLKTEQWPQKLIMQLIPQQLLTTLGPLFRNSRMVQFHFTNKDLDSLKGLYRIMGNGFAGCVHFPHTAPCEVRVLMLLYSSKKKIFMGLIPYDQSGFVNGIRQVITNHKQVQQQKLEQQRGMGAQQAPPGLGPILEDQARPSQNLLQLRPPQPQPQGTVGASAAAGQPQPQGAAPAPPGAPQGPPGAAPGPPPPGPLLRPQNPGANPQLRSLLLNPPPPQTGVPPPQASLHHLQPPGAPALLPPPHQGLGQPQLGPPLLHPPPAQSWPAQLPPRASLPGQMLLSGGPRGPVPQPGLQPSVMEDDILMDLI.

The interval 1–226 is interaction with the Mediator complex; the sequence is MVPGSEGPAR…PRHMVLVRGL (226 aa). Disordered stretches follow at residues 233–273 and 298–390; these read GSAP…QQYQ and GLGP…PALG. Over residues 238–251 the composition is skewed to pro residues; sequence PLQPKQPVPLPPAA. Low complexity predominate over residues 252 to 262; the sequence is PAGATLSTAPQ. Positions 329–342 are enriched in pro residues; it reads PPGPPGAPKPPPAS. Positions 343 to 354 are enriched in low complexity; sequence QPSLVSTVAPGP. The tract at residues 389-543 is interaction with VP16; sequence LGGQQSVSNK…VNGIRQVITN (155 aa). The segment at 395-545 is interaction with CREBBP; the sequence is VSNKLLAWSG…GIRQVITNHK (151 aa). Positions 548-746 are disordered; it reads QQQKLEQQRG…MEDDILMDLI (199 aa). Interaction with RARA regions lie at residues 563–652 and 639–706; these read APPG…LLNP and PGAN…WPAQ. Low complexity predominate over residues 599 to 610; sequence AAAGQPQPQGAA. The segment covering 611-633 has biased composition (pro residues); sequence PAPPGAPQGPPGAAPGPPPPGPL. Residues 645 to 649 carry the LXXLL motif motif; that stretch reads LRSLL. Composition is skewed to pro residues over residues 651 to 663, 672 to 682, and 690 to 701; these read NPPP…PPPQ, PGAPALLPPPH, and LGPPLLHPPPAQ. R724 carries the post-translational modification Asymmetric dimethylarginine. Positions 737–746 are enriched in acidic residues; the sequence is MEDDILMDLI.

This sequence belongs to the Mediator complex subunit 25 family. Component of the Mediator complex, which is composed of MED1, MED4, MED6, MED7, MED8, MED9, MED10, MED11, MED12, MED13, MED13L, MED14, MED15, MED16, MED17, MED18, MED19, MED20, MED21, MED22, MED23, MED24, MED25, MED26, MED27, MED29, MED30, MED31, CCNC, CDK8 and CDC2L6/CDK11. The MED12, MED13, CCNC and CDK8 subunits form a distinct module termed the CDK8 module. Mediator containing the CDK8 module is less active than Mediator lacking this module in supporting transcriptional activation. Individual preparations of the Mediator complex lacking one or more distinct subunits have been variously termed ARC, CRSP, DRIP, PC2, SMCC and TRAP. Interacts with CREBBP. Interacts with ESR1, GR, RARA, RXRA and THRB in a ligand-dependent fashion. Binds the Herpes simplex virus activator VP16.

It localises to the nucleus. Component of the Mediator complex, a coactivator involved in the regulated transcription of nearly all RNA polymerase II-dependent genes. Mediator functions as a bridge to convey information from gene-specific regulatory proteins to the basal RNA polymerase II transcription machinery. Mediator is recruited to promoters by direct interactions with regulatory proteins and serves as a scaffold for the assembly of a functional preinitiation complex with RNA polymerase II and the general transcription factors. Required for RARA/RXRA-mediated transcription. The protein is Mediator of RNA polymerase II transcription subunit 25 (MED25) of Bos taurus (Bovine).